The following is a 450-amino-acid chain: Glutamate--tRNA ligase 2 (450 aa).

The short motif at 10–20 is the 'HIGH' region element; that stretch reads PSPTGRIHIGN. The short motif at 243-247 is the 'KMSKS' region element; that stretch reads GFSKR. Lys246 is a binding site for ATP.

This sequence belongs to the class-I aminoacyl-tRNA synthetase family. Glutamate--tRNA ligase type 1 subfamily. In terms of assembly, monomer.

The protein localises to the cytoplasm. The catalysed reaction is tRNA(Glu) + L-glutamate + ATP = L-glutamyl-tRNA(Glu) + AMP + diphosphate. Catalyzes the attachment of glutamate to tRNA(Glu) in a two-step reaction: glutamate is first activated by ATP to form Glu-AMP and then transferred to the acceptor end of tRNA(Glu). The sequence is that of Glutamate--tRNA ligase 2 from Beijerinckia indica subsp. indica (strain ATCC 9039 / DSM 1715 / NCIMB 8712).